A 242-amino-acid polypeptide reads, in one-letter code: Sugar fermentation stimulation protein homolog (242 aa).

This sequence belongs to the SfsA family.

This Nitratidesulfovibrio vulgaris (strain DP4) (Desulfovibrio vulgaris) protein is Sugar fermentation stimulation protein homolog.